The following is a 251-amino-acid chain: Seminal metalloprotease 1 (251 aa).

A signal peptide spans 1–18 (MFPQIWGVIFLFTPTVFS). A Peptidase M12A domain is found at 44–248 (NGIVNQIYHW…RKLNKMYRCP (205 aa)). 2 N-linked (GlcNAc...) asparagine glycosylation sites follow: N55 and N120. 2 disulfide bridges follow: C87/C247 and C111/C136. Zn(2+) is bound at residue H144. Residue E145 is part of the active site. The Zn(2+) site is built by H148 and H154. N185 carries N-linked (GlcNAc...) asparagine glycosylation.

Zn(2+) serves as cofactor. In terms of processing, undergoes cleavage in the male during mating with a cleaved product detected in the ejaculatory duct and/or bulb of males by 8-10 minutes after the start of mating. Further cleavage occurs in the mated female. May undergo cleavage in a two-step process where it is first cleaved by Sems, making it susceptible to activational cleavage which may be carried out by another protease or by autocleavage. In terms of tissue distribution, produced in the male accessory glands and secreted into seminal fluid. In mated females, confined to the reproductive tract and also detected in eggs laid by mated females (at protein level).

The protein resides in the secreted. Its function is as follows. Seminal fluid metalloprotease which is transferred to females during mating and is required for processing of two other seminal fluid proteins Acp26Aa and Acp36DE in mated females. The protein is Seminal metalloprotease 1 of Drosophila melanogaster (Fruit fly).